The primary structure comprises 480 residues: ATP synthase subunit beta (480 aa).

166 to 173 (GGAGVGKT) provides a ligand contact to ATP.

This sequence belongs to the ATPase alpha/beta chains family. As to quaternary structure, F-type ATPases have 2 components, CF(1) - the catalytic core - and CF(0) - the membrane proton channel. CF(1) has five subunits: alpha(3), beta(3), gamma(1), delta(1), epsilon(1). CF(0) has three main subunits: a(1), b(2) and c(9-12). The alpha and beta chains form an alternating ring which encloses part of the gamma chain. CF(1) is attached to CF(0) by a central stalk formed by the gamma and epsilon chains, while a peripheral stalk is formed by the delta and b chains.

Its subcellular location is the cell membrane. It carries out the reaction ATP + H2O + 4 H(+)(in) = ADP + phosphate + 5 H(+)(out). In terms of biological role, produces ATP from ADP in the presence of a proton gradient across the membrane. The catalytic sites are hosted primarily by the beta subunits. This chain is ATP synthase subunit beta, found in Streptomyces griseus subsp. griseus (strain JCM 4626 / CBS 651.72 / NBRC 13350 / KCC S-0626 / ISP 5235).